A 471-amino-acid polypeptide reads, in one-letter code: Coronin-6 (471 aa).

5 WD repeats span residues 79 to 119 (GHTG…PVRN), 129 to 169 (GHSK…VLLS), 173 to 212 (IHPDVIHSVCWNSNGSLLATTCKDKTLRIIDPRKSQVVAE), 216 to 259 (PHEG…EPVA), and 264 to 304 (DTSN…PFVH). A disordered region spans residues 410–433 (ILDVRPPASPRRSQSASEAPLSQH). The segment covering 419–429 (PRRSQSASEAP) has biased composition (low complexity). The stretch at 426-468 (SEAPLSQHTLETLLEEIKALRDRVQAQEERITALENMLCELVD) forms a coiled coil.

The chain is Coronin-6 (Coro6) from Mus musculus (Mouse).